The sequence spans 330 residues: Putative [LysW]-L-2-aminoadipate/[LysW]-L-glutamate phosphate reductase (330 aa).

NADP(+) contacts are provided by residues 10-13 and 34-36; these read SGYI and SRR. Residue Cys142 is part of the active site. Asn297 serves as a coordination point for NADP(+).

Belongs to the NAGSA dehydrogenase family. Type 1 subfamily. LysY sub-subfamily.

The protein localises to the cytoplasm. It carries out the reaction [amino-group carrier protein]-C-terminal-N-(1-carboxy-5-oxopentan-1-yl)-L-glutamine + phosphate + NADP(+) = [amino-group carrier protein]-C-terminal-N-(1-carboxy-5-phosphooxy-5-oxopentan-1-yl)-L-glutamine + NADPH + H(+). The catalysed reaction is [amino-group carrier protein]-C-terminal-gamma-(L-glutamyl-5-semialdehyde)-L-glutamate + phosphate + NADP(+) = [amino-group carrier protein]-C-terminal-gamma-(5-phospho-L-glutamyl)-L-glutamate + NADPH + H(+). It functions in the pathway amino-acid biosynthesis; L-lysine biosynthesis via AAA pathway; L-lysine from L-alpha-aminoadipate (Thermus route): step 3/5. Its pathway is amino-acid biosynthesis; L-arginine biosynthesis. Functionally, involved in both the arginine and lysine biosynthetic pathways. The polypeptide is Putative [LysW]-L-2-aminoadipate/[LysW]-L-glutamate phosphate reductase (Thermococcus kodakarensis (strain ATCC BAA-918 / JCM 12380 / KOD1) (Pyrococcus kodakaraensis (strain KOD1))).